The primary structure comprises 275 residues: Adaptin ear-binding coat-associated protein 1 (275 aa).

The disordered stretch occupies residues 168–275; the sequence is AKKGGASKPR…APQPSNWVQF (108 aa). A compositionally biased stretch (pro residues) spans 187–201; the sequence is LPPPPGGKVTIPPPS. At Thr211 the chain carries Phosphothreonine. The segment covering 233–248 has biased composition (low complexity); it reads SPAPVSTSAPAPVSTS. 2 short sequence motifs (WXXF motif) span residues 252–255 and 272–275; these read WGDF and WVQF. A compositionally biased stretch (polar residues) spans 256–275; that stretch reads STASSSVPNQAPQPSNWVQF.

The protein belongs to the NECAP family. Interacts with AP1G1 and AP2A1 components of the adapter protein complexes AP-1 and AP-2. Interacts with the GAE domain proteins GGA1, GGA2 and GGA3. In terms of tissue distribution, expressed primarily in brain (at protein level).

The protein resides in the cytoplasmic vesicle. Its subcellular location is the clathrin-coated vesicle membrane. It localises to the cell membrane. Functionally, involved in endocytosis. This is Adaptin ear-binding coat-associated protein 1 (Necap1) from Mus musculus (Mouse).